Consider the following 119-residue polypeptide: Integration host factor subunit alpha (119 aa).

The disordered stretch occupies residues 96–119; that stretch reads INGQQANGKMNGESAPSEFSAETE.

The protein belongs to the bacterial histone-like protein family. Heterodimer of an alpha and a beta chain.

Functionally, this protein is one of the two subunits of integration host factor, a specific DNA-binding protein that functions in genetic recombination as well as in transcriptional and translational control. The polypeptide is Integration host factor subunit alpha (Bradyrhizobium sp. (strain ORS 278)).